A 388-amino-acid polypeptide reads, in one-letter code: Beta-1,4-galactosyltransferase 5 (388 aa).

The Cytoplasmic portion of the chain corresponds to 1–14 (MRVRRGLLRLPRRS). A helical; Signal-anchor for type II membrane protein membrane pass occupies residues 15 to 35 (LLAALFFFSLSSSLLYFVYVA). Residues 36-388 (PGIVNTYLFM…TPELAQVTEY (353 aa)) lie on the Lumenal side of the membrane. Residues asparagine 77, asparagine 81, asparagine 90, asparagine 111, and asparagine 128 are each glycosylated (N-linked (GlcNAc...) asparagine). A disulfide bridge links cysteine 114 with cysteine 158. Residues 169 to 173 (PFRNR), 208 to 210 (FNR), 235 to 236 (VD), tyrosine 264, and tryptophan 296 contribute to the UDP-alpha-D-galactose site. The cysteines at positions 229 and 248 are disulfide-linked. Aspartate 236 contributes to the Mn(2+) binding site. 298 to 301 (GEDD) provides a ligand contact to N-acetyl-D-glucosamine. Position 329–330 (329–330 (YH)) interacts with UDP-alpha-D-galactose. Arginine 340 lines the N-acetyl-D-glucosamine pocket. N-linked (GlcNAc...) asparagine glycosylation is found at asparagine 364 and asparagine 373.

Belongs to the glycosyltransferase 7 family. In terms of assembly, (Microbial infection) Interacts with porcine reproductive and respiratory syndrome virus GP5. Requires Mn(2+) as cofactor.

The protein localises to the golgi apparatus. The protein resides in the golgi stack membrane. It catalyses the reaction a beta-D-glucosyl-(1&lt;-&gt;1')-N-acylsphing-4-enine + UDP-alpha-D-galactose = a beta-D-Gal-(1-&gt;4)-beta-D-Glc-(1&lt;-&gt;1)-Cer(d18:1(4E)) + UDP + H(+). The protein operates within protein modification; protein glycosylation. Its pathway is sphingolipid metabolism. Catalyzes the synthesis of lactosylceramide (LacCer) via the transfer of galactose from UDP-galactose to glucosylceramide (GlcCer). LacCer is the starting point in the biosynthesis of all gangliosides (membrane-bound glycosphingolipids) which play pivotal roles in the CNS including neuronal maturation and axonal and myelin formation. Plays a role in the glycosylation of BMPR1A and regulation of its protein stability. Essential for extraembryonic development during early embryogenesis. In terms of biological role, (Microbial infection) May play a role in the glycosylation of porcine reproductive and respiratory syndrome virus GP5 protein and may be involved in the regulation of viral proliferation. This is Beta-1,4-galactosyltransferase 5 (B4GALT5) from Sus scrofa (Pig).